A 205-amino-acid polypeptide reads, in one-letter code: Protein PAXX (205 aa).

In terms of domain architecture, PISA spans 39–81; that stretch reads FNLYVTDAAELWSTCFSPDSLARLKARFGLSGAEDIHSRFRAA. Thr-147 is modified (phosphothreonine). Residues 147 to 159 show a composition bias toward polar residues; sequence TITSPKKNTQPAG. The interval 147-205 is disordered; sequence TITSPKKNTQPAGTQFLPELDHQRGSSGPGVRRRCPGESLINPGFKSKKPAAGVDFDET. Ser-150 bears the Phosphoserine mark. A mediates interaction with XRCC5/Ku80 and XRCC6/Ku70 and association with the non-homologous end joining core complex region spans residues 172–205; sequence SSGPGVRRRCPGESLINPGFKSKKPAAGVDFDET. Residues 191-205 carry the XLM motif; it reads FKSKKPAAGVDFDET.

Belongs to the XRCC4-XLF family. PAXX subfamily. In terms of assembly, homodimer. Interacts with the DNA-bound XRCC5/Ku80 and XRCC6/Ku70 heterodimer (Ku complex); the interaction is direct. Associated component of the non-homologous end joining (NHEJ) complex, composed of the core proteins PRKDC, LIG4, XRCC4, XRCC6/Ku70, XRCC5/Ku86 and NHEJ1/XLF. Interacts with POLL (DNA polymerase lambda); promoting POLL recruitment to double-strand breaks (DSBs) and stimulation of the end-filling activity of POLL. Post-translationally, phosphorylation may inhibit interaction with the DNA-bound XRCC5/Ku80 and XRCC6/Ku70 heterodimer (Ku complex).

The protein resides in the nucleus. The protein localises to the chromosome. In terms of biological role, non-essential DNA repair protein involved in DNA non-homologous end joining (NHEJ); participates in double-strand break (DSB) repair and V(D)J recombination. May act as a scaffold required for accumulation of the Ku heterodimer, composed of XRCC5/Ku80 and XRCC6/Ku70, at double-strand break sites and promote the assembly and/or stability of the NHEJ machinery. Involved in NHEJ by promoting the ligation of blunt-ended DNA ends. Together with NHEJ1/XLF, collaborates with DNA polymerase lambda (POLL) to promote joining of non-cohesive DNA ends. Constitutes a non-essential component of classical NHEJ: has a complementary but distinct function with NHEJ1/XLF in DNA repair. In Mus musculus (Mouse), this protein is Protein PAXX.